Consider the following 269-residue polypeptide: NAD kinase (269 aa).

Asp-45 (proton acceptor) is an active-site residue. Residues 45–46, 122–123, Arg-149, Asp-151, and Ala-186 contribute to the NAD(+) site; these read DG and NE.

The protein belongs to the NAD kinase family. The cofactor is a divalent metal cation.

The protein resides in the cytoplasm. The enzyme catalyses NAD(+) + ATP = ADP + NADP(+) + H(+). Its function is as follows. Involved in the regulation of the intracellular balance of NAD and NADP, and is a key enzyme in the biosynthesis of NADP. Catalyzes specifically the phosphorylation on 2'-hydroxyl of the adenosine moiety of NAD to yield NADP. In Staphylococcus epidermidis (strain ATCC 35984 / DSM 28319 / BCRC 17069 / CCUG 31568 / BM 3577 / RP62A), this protein is NAD kinase.